An 808-amino-acid chain; its full sequence is Spindle assembly abnormal protein 4 (808 aa).

Residues 1–151 are disordered; the sequence is MASDENIGAD…PDEPSTLVNS (151 aa). The segment covering 42–54 has biased composition (low complexity); sequence PPTSELSSASSPS. 2 stretches are compositionally biased toward polar residues: residues 61 to 78 and 85 to 104; these read SLSN…SGIS and PPTT…SPEN. Positions 113-123 are enriched in basic and acidic residues; it reads AEEHGHSGQHA. Residues 124–133 show a composition bias toward acidic residues; that stretch reads EEEEDNDTDE. A coiled-coil region spans residues 161–181; sequence KYKNAAAEFKAFERRMDSMRS. Disordered regions lie at residues 187-206 and 271-298; these read TSLA…PPTR and VTAP…DENR. Polar residues predominate over residues 280–294; the sequence is MMNSSRQNPQNGNVQ. Positions 314 to 503 form a coiled coil; that stretch reads LDRQKLEIEI…ERDDKEKEMF (190 aa). Over residues 511 to 529 the composition is skewed to polar residues; the sequence is KTSNPVPPVLNQSVPISIT. The segment at 511-564 is disordered; that stretch reads KTSNPVPPVLNQSVPISITSNGPSRHPSSSSLTTFRKPSTSNRERGVSWADEPN. Residues 530-541 show a composition bias toward low complexity; the sequence is SNGPSRHPSSSS. Over residues 542–551 the composition is skewed to polar residues; the sequence is LTTFRKPSTS.

As to quaternary structure, interacts with hyls-1; leading to hyls-1 localization into newly forming centrioles.

It localises to the cytoplasm. It is found in the cytoskeleton. The protein resides in the microtubule organizing center. The protein localises to the centrosome. Required for centrosome duplication. Plays a central role in determining centrosome size. The chain is Spindle assembly abnormal protein 4 (sas-4) from Caenorhabditis elegans.